The chain runs to 151 residues: UPF0178 protein ESA_02916 (151 aa).

The protein belongs to the UPF0178 family.

The sequence is that of UPF0178 protein ESA_02916 from Cronobacter sakazakii (strain ATCC BAA-894) (Enterobacter sakazakii).